Consider the following 519-residue polypeptide: Sensory neuron membrane protein 2 (519 aa).

The Cytoplasmic segment spans residues 1-7; that stretch reads MLAKHSK. A helical transmembrane segment spans residues 8-28; sequence LFFTGSVVFLIVAIVLASWGF. The Extracellular portion of the chain corresponds to 29 to 469; that stretch reads PKIISTRIQK…DAHALLSYAQ (441 aa). Asn-44, Asn-67, Asn-104, Asn-166, Asn-229, Asn-272, and Asn-314 each carry an N-linked (GlcNAc...) asparagine glycan. Intrachain disulfides connect Cys-268/Cys-338, Cys-299/Cys-362, and Cys-340/Cys-351. Residues 470-490 traverse the membrane as a helical segment; that stretch reads LARWIILAAAIILAIIATITV. The Cytoplasmic segment spans residues 491 to 519; it reads ARSTSLISWPRNSNSVNFIIGPMVNDKMR.

This sequence belongs to the CD36 family. Localizes to both male and female antennae but not the leg, wing, gut, head or thoracic ganglia. Detected throughout the sensory epithelium, associating with both sex-pheromone sensilla and plant-volatile sensilla. Differentially expressed among different sensilla and different neurons within a given sensillum.

Its subcellular location is the cell membrane. Plays an olfactory role that is not restricted to pheromone sensitivity. The sequence is that of Sensory neuron membrane protein 2 from Manduca sexta (Tobacco hawkmoth).